Reading from the N-terminus, the 678-residue chain is Oviduct-specific glycoprotein (678 aa).

The signal sequence occupies residues 1–21 (MWKLLLWVGLVLVLKHHDGAA). The GH18 domain maps to 22 to 385 (HKLVCYFTNW…YVLNDILVRA (364 aa)). A disulfide bridge connects residues cysteine 26 and cysteine 51. Chitin is bound by residues 71-72 (LQ), 98-101 (GGWN), tyrosine 142, 211-214 (LSYD), and tryptophan 355. Asparagine 402 and asparagine 441 each carry an N-linked (GlcNAc...) asparagine glycan. The interval 524 to 544 (LTPVGHQSVTPVSHQSVSPGG) is disordered. A compositionally biased stretch (polar residues) spans 528–544 (GHQSVTPVSHQSVSPGG). N-linked (GlcNAc...) asparagine glycans are attached at residues asparagine 580, asparagine 596, and asparagine 648. The tract at residues 581–606 (ISVTPEGQTMPLRGENLTSEVGTHPR) is disordered. Residues 651 to 662 (SVNSVTPQTSPL) are compositionally biased toward polar residues. Residues 651–678 (SVNSVTPQTSPLSLKKEIPENSAVDEEA) form a disordered region.

Belongs to the glycosyl hydrolase 18 family. As to expression, oviduct.

It is found in the cytoplasmic vesicle. The protein resides in the secretory vesicle. In terms of biological role, binds to oocyte zona pellucida in vivo. May play a role in the fertilization process and/or early embryonic development. The protein is Oviduct-specific glycoprotein (OVGP1) of Homo sapiens (Human).